The following is a 73-amino-acid chain: Mauriporin (73 aa).

Positions 1-22 (MNKKTLLVIFFITMLIVDEVNS) are cleaved as a signal peptide.

This sequence belongs to the non-disulfide-bridged peptide (NDBP) superfamily. Long chain multifunctional peptide (group 2) family. In terms of tissue distribution, expressed by the venom gland.

Its subcellular location is the secreted. It localises to the target cell membrane. Its function is as follows. Amphipathic peptide that displays potent antimicrobial activities against a range of Gram-positive and Gram-negative planktonic bacteria with MIC values in the range 5 uM to 10 uM. In more details, it is active on Listeria ivanovii (MIC=5 uM), Staphylococcus epidermidis (MIC=10 uM), Salmonella enterica (MIC=5 uM), Pseudomonas aeruginosa (ATCC 27853) (MIC=5 uM), Acinetobacter baumannii (MIC=5 uM), Klebsiella pneumoniae (MIC=5 uM), Escherichia coli (MIC=7.5 uM), Salmonella typhimurium (MIC=7.5 uM), Pseudomonas aeruginosa (ATCC 9027) (MIC=10 uM). Is also able to prevent P.aeruginosa biofilm formation while showing weak hemolytic activity towards human erythrocytes. Probably induces bacterial cell death through membrane permeabilization. Moreover, shows DNA-binding activities. Also exerts potent selective cytotoxic and antiproliferative activity against three different prostate cancer cell lines (IC(50)=4.4-7.8 uM), compared to non-tumorigenic cell lines (IC(50)=59.7 uM in Vero and 62.5 uM in HUVEC cells). This peptide possibly exerts its cytotoxic activity through a necrotic mode of cell death. Only shows diminished hemolytic activity against sheep erythrocytes. Does not induce cell death through apoptosis and consequently is not acting upon an intracellular target. This Androctonus mauritanicus (Fat-tailed scorpion) protein is Mauriporin.